Here is a 637-residue protein sequence, read N- to C-terminus: Chaperone protein HtpG (637 aa).

The segment at 1-334 (MQDVVNSEKL…SSDLPLNISR (334 aa)) is a; substrate-binding. Residues 335–558 (ETLQNNKVIE…DGSMDIRMER (224 aa)) form a b region. A c region spans residues 559–637 (FLREQKQLNY…MNNVLVKVYQ (79 aa)).

Belongs to the heat shock protein 90 family. As to quaternary structure, homodimer.

Its subcellular location is the cytoplasm. Molecular chaperone. Has ATPase activity. The sequence is that of Chaperone protein HtpG from Ehrlichia canis (strain Jake).